We begin with the raw amino-acid sequence, 452 residues long: Bifunctional protein GlmU (452 aa).

Residues 1–232 are pyrophosphorylase; sequence MTGRSCLTIV…EDEVRGINTK (232 aa). UDP-N-acetyl-alpha-D-glucosamine contacts are provided by residues 11 to 14, K25, Q78, and 83 to 84; these read LAAG and GT. Residue D108 coordinates Mg(2+). Positions 144, 158, 173, and 230 each coordinate UDP-N-acetyl-alpha-D-glucosamine. N230 lines the Mg(2+) pocket. Positions 233 to 253 are linker; sequence AQLAEAEQVMQARLRKEALDA. The interval 254–452 is N-acetyltransferase; it reads GVTMVAPDTV…KLLAKKPKTG (199 aa). 2 residues coordinate UDP-N-acetyl-alpha-D-glucosamine: R319 and K337. The Proton acceptor role is filled by H349. UDP-N-acetyl-alpha-D-glucosamine is bound by residues Y352 and N363. Acetyl-CoA contacts are provided by residues A366, 372 to 373, S391, S409, and R426; that span reads NY.

The protein in the N-terminal section; belongs to the N-acetylglucosamine-1-phosphate uridyltransferase family. This sequence in the C-terminal section; belongs to the transferase hexapeptide repeat family. As to quaternary structure, homotrimer. Requires Mg(2+) as cofactor.

Its subcellular location is the cytoplasm. It carries out the reaction alpha-D-glucosamine 1-phosphate + acetyl-CoA = N-acetyl-alpha-D-glucosamine 1-phosphate + CoA + H(+). It catalyses the reaction N-acetyl-alpha-D-glucosamine 1-phosphate + UTP + H(+) = UDP-N-acetyl-alpha-D-glucosamine + diphosphate. Its pathway is nucleotide-sugar biosynthesis; UDP-N-acetyl-alpha-D-glucosamine biosynthesis; N-acetyl-alpha-D-glucosamine 1-phosphate from alpha-D-glucosamine 6-phosphate (route II): step 2/2. It functions in the pathway nucleotide-sugar biosynthesis; UDP-N-acetyl-alpha-D-glucosamine biosynthesis; UDP-N-acetyl-alpha-D-glucosamine from N-acetyl-alpha-D-glucosamine 1-phosphate: step 1/1. The protein operates within bacterial outer membrane biogenesis; LPS lipid A biosynthesis. Its function is as follows. Catalyzes the last two sequential reactions in the de novo biosynthetic pathway for UDP-N-acetylglucosamine (UDP-GlcNAc). The C-terminal domain catalyzes the transfer of acetyl group from acetyl coenzyme A to glucosamine-1-phosphate (GlcN-1-P) to produce N-acetylglucosamine-1-phosphate (GlcNAc-1-P), which is converted into UDP-GlcNAc by the transfer of uridine 5-monophosphate (from uridine 5-triphosphate), a reaction catalyzed by the N-terminal domain. The protein is Bifunctional protein GlmU of Nitrobacter hamburgensis (strain DSM 10229 / NCIMB 13809 / X14).